Reading from the N-terminus, the 337-residue chain is tRNA N6-adenosine threonylcarbamoyltransferase (337 aa).

Positions 110 and 114 each coordinate Fe cation. Substrate-binding positions include 133-137, Asp-166, Gly-179, and Asn-271; that span reads LVSGK. Fe cation is bound at residue Asp-300.

The protein belongs to the KAE1 / TsaD family. Requires Fe(2+) as cofactor.

It localises to the cytoplasm. It carries out the reaction L-threonylcarbamoyladenylate + adenosine(37) in tRNA = N(6)-L-threonylcarbamoyladenosine(37) in tRNA + AMP + H(+). Functionally, required for the formation of a threonylcarbamoyl group on adenosine at position 37 (t(6)A37) in tRNAs that read codons beginning with adenine. Is involved in the transfer of the threonylcarbamoyl moiety of threonylcarbamoyl-AMP (TC-AMP) to the N6 group of A37, together with TsaE and TsaB. TsaD likely plays a direct catalytic role in this reaction. The chain is tRNA N6-adenosine threonylcarbamoyltransferase from Buchnera aphidicola subsp. Schizaphis graminum (strain Sg).